The chain runs to 148 residues: Large ribosomal subunit protein bL9 (148 aa).

The protein belongs to the bacterial ribosomal protein bL9 family.

Binds to the 23S rRNA. The protein is Large ribosomal subunit protein bL9 of Geobacter sulfurreducens (strain ATCC 51573 / DSM 12127 / PCA).